The following is a 262-amino-acid chain: Nurim (262 aa).

Topologically, residues 1 to 4 (MAPA) are nuclear. A helical transmembrane segment spans residues 5 to 28 (LLLIPAALASFILAFGTGVEFVRF). Residues 29-58 (TSLRPLLGGIPESGGPDARQGWLAALQDRS) are Perinuclear space-facing. Residues 59-80 (ILAPLAWDLGLLLLFVGQHSLM) form a helical membrane-spanning segment. Topologically, residues 81 to 97 (AAERVKAWTSRYFGVLQ) are nuclear. Residues 98-114 (RSLYVACTALALQLVMR) traverse the membrane as a helical segment. Topologically, residues 115–133 (YWEPIPKGPVLWEARAEPW) are perinuclear space. A helical transmembrane segment spans residues 134–164 (ATWVPLLCFVLHVISWLLIFSILLVFDYAEL). Over 165–191 (MGLKQVYYHVLGLGEPLALKSPRALRL) the chain is Nuclear. The chain crosses the membrane as a helical span at residues 192 to 210 (FSHLRHPVCVELLTVLWVV). The Perinuclear space portion of the chain corresponds to 211–216 (PTLGTD). The chain crosses the membrane as a helical span at residues 217–234 (RLLLAFLLTLYLGLAHGL). The Nuclear segment spans residues 235–262 (DQQDLRYLRAQLQRKLHLLSRPQDGEAE).

Belongs to the nurim family.

Its subcellular location is the nucleus inner membrane. This chain is Nurim (NRM), found in Homo sapiens (Human).